The primary structure comprises 138 residues: Probable lactoylglutathione lyase (138 aa).

The region spanning 5 to 129 (RILHTMLRVG…DGYMIELIQN (125 aa)) is the VOC domain. A Ni(2+)-binding site is contributed by histidine 8. Arginine 12 is a substrate binding site. A Ni(2+)-binding site is contributed by glutamate 59. Substrate is bound by residues asparagine 63 and histidine 77. The Ni(2+) site is built by histidine 77 and glutamate 125. Glutamate 125 serves as the catalytic Proton donor/acceptor.

The protein belongs to the glyoxalase I family. Ni(2+) serves as cofactor.

It catalyses the reaction (R)-S-lactoylglutathione = methylglyoxal + glutathione. Its pathway is secondary metabolite metabolism; methylglyoxal degradation; (R)-lactate from methylglyoxal: step 1/2. Catalyzes the conversion of hemimercaptal, formed from methylglyoxal and glutathione, to S-lactoylglutathione. In Vibrio parahaemolyticus serotype O3:K6 (strain RIMD 2210633), this protein is Probable lactoylglutathione lyase (gloA).